The following is a 275-amino-acid chain: Transmembrane protein 202 (275 aa).

Transmembrane regions (helical) follow at residues 60–80, 116–136, 151–171, and 193–213; these read SGFS…QFLV, ALFL…LSSC, VSML…LFLA, and WCSE…FITF.

The protein localises to the membrane. The protein is Transmembrane protein 202 (Tmem202) of Mus musculus (Mouse).